Consider the following 40-residue polypeptide: Sauvagin (40 aa).

A Pyrrolidone carboxylic acid modification is found at Q1. The residue at position 40 (I40) is an Isoleucine amide.

Belongs to the sauvagine/corticotropin-releasing factor/urotensin I family.

It is found in the secreted. Functionally, hypotensive and diuretic peptide. This is Sauvagin from Phyllomedusa sauvagei (Sauvage's leaf frog).